The primary structure comprises 60 residues: MAVPRNRHSNARKNIRRSHDAKKARHAAVCNNCKQAFIPHTVCTSCGFYNGKAVMTVEKK.

The segment at 1 to 21 (MAVPRNRHSNARKNIRRSHDA) is disordered.

The protein belongs to the bacterial ribosomal protein bL32 family.

The chain is Large ribosomal subunit protein bL32 from Chlamydia felis (strain Fe/C-56) (Chlamydophila felis).